A 90-amino-acid chain; its full sequence is DNA-binding protein HU-beta (90 aa).

It belongs to the bacterial histone-like protein family. In terms of assembly, heterodimer of an alpha and a beta chain.

Functionally, histone-like DNA-binding protein which is capable of wrapping DNA to stabilize it, and thus to prevent its denaturation under extreme environmental conditions. This is DNA-binding protein HU-beta (hupB) from Salmonella typhi.